A 337-amino-acid chain; its full sequence is Ferredoxin--NADP reductase (337 aa).

FAD is bound by residues Glu42, Gln50, Tyr55, Val97, Phe130, Asp292, and Thr333.

The protein belongs to the ferredoxin--NADP reductase type 2 family. In terms of assembly, homodimer. It depends on FAD as a cofactor.

The enzyme catalyses 2 reduced [2Fe-2S]-[ferredoxin] + NADP(+) + H(+) = 2 oxidized [2Fe-2S]-[ferredoxin] + NADPH. This chain is Ferredoxin--NADP reductase, found in Streptococcus mutans serotype c (strain ATCC 700610 / UA159).